The following is a 360-amino-acid chain: Dual-specificity RNA methyltransferase RlmN (360 aa).

The active-site Proton acceptor is E89. In terms of domain architecture, Radical SAM core spans 95–330 (DSGRGTLCVS…TRVTRGQDID (236 aa)). A disulfide bridge connects residues C102 and C333. 3 residues coordinate [4Fe-4S] cluster: C109, C113, and C116. Residues 159–160 (GE), S191, 213–215 (SLH), and N290 each bind S-adenosyl-L-methionine. C333 functions as the S-methylcysteine intermediate in the catalytic mechanism.

The protein belongs to the radical SAM superfamily. RlmN family. It depends on [4Fe-4S] cluster as a cofactor.

The protein resides in the cytoplasm. It catalyses the reaction adenosine(2503) in 23S rRNA + 2 reduced [2Fe-2S]-[ferredoxin] + 2 S-adenosyl-L-methionine = 2-methyladenosine(2503) in 23S rRNA + 5'-deoxyadenosine + L-methionine + 2 oxidized [2Fe-2S]-[ferredoxin] + S-adenosyl-L-homocysteine. The catalysed reaction is adenosine(37) in tRNA + 2 reduced [2Fe-2S]-[ferredoxin] + 2 S-adenosyl-L-methionine = 2-methyladenosine(37) in tRNA + 5'-deoxyadenosine + L-methionine + 2 oxidized [2Fe-2S]-[ferredoxin] + S-adenosyl-L-homocysteine. Functionally, specifically methylates position 2 of adenine 2503 in 23S rRNA and position 2 of adenine 37 in tRNAs. m2A2503 modification seems to play a crucial role in the proofreading step occurring at the peptidyl transferase center and thus would serve to optimize ribosomal fidelity. This is Dual-specificity RNA methyltransferase RlmN from Alkalilimnicola ehrlichii (strain ATCC BAA-1101 / DSM 17681 / MLHE-1).